The following is a 236-amino-acid chain: Peroxisomal coenzyme A diphosphatase NUDT7 (236 aa).

Lys20 bears the N6-succinyllysine mark. Residues 37–169 (SNKFSVLVPL…QKQITQSGRD (133 aa)) enclose the Nudix hydrolase domain. A Nudix box motif is present at residues 77–98 (KRDPVDTDDTATALREAQEEVG). Residues Glu92 and Glu96 each coordinate Mg(2+). The residue at position 178 (Lys178) is an N6-succinyllysine. The short motif at 234 to 236 (SKL) is the Microbody targeting signal element.

This sequence belongs to the Nudix hydrolase family. PCD1 subfamily. As to quaternary structure, monomer. It depends on Mn(2+) as a cofactor. The cofactor is Mg(2+). In terms of tissue distribution, highly expressed in liver, brown adipose tissue and heart. Expressed at intermediate level in lung and kidney and at low level in brain. As to expression, expressed in liver, brown adipose tissue and heart at 20 times lower levels than isoform 1.

Its subcellular location is the peroxisome. It catalyses the reaction hexanoyl-CoA + H2O = hexanoyl-4'-phosphopantetheine + adenosine 3',5'-bisphosphate + 2 H(+). The enzyme catalyses octanoyl-CoA + H2O = S-octanoyl-4'-phosphopantetheine + adenosine 3',5'-bisphosphate + 2 H(+). It carries out the reaction butanoyl-CoA + H2O = S-butanoyl-4'-phosphopantetheine + adenosine 3',5'-bisphosphate + 2 H(+). The catalysed reaction is decanoyl-CoA + H2O = decanoyl-4'-phosphopantetheine + adenosine 3',5'-bisphosphate + 2 H(+). It catalyses the reaction dodecanoyl-CoA + H2O = S-dodecanoyl-4'-phosphopantetheine + adenosine 3',5'-bisphosphate + 2 H(+). The enzyme catalyses tetradecanoyl-CoA + H2O = tetradecanoyl-4'-phosphopantetheine + adenosine 3',5'-bisphosphate + 2 H(+). It carries out the reaction choloyl-CoA + H2O = S-choloyl-4'-phosphopantetheine + adenosine 3',5'-bisphosphate + 2 H(+). The catalysed reaction is 3alpha,7alpha,12alpha-trihydroxy-5beta-cholestan-26-oyl-CoA + H2O = 3alpha,7alpha,12alpha-trihydroxy-5beta-cholestan-26-oyl-4'-phosphopantetheine + adenosine 3',5'-bisphosphate + 2 H(+). It catalyses the reaction acetyl-CoA + H2O = S-acetyl-4'-phosphopantetheine + adenosine 3',5'-bisphosphate + 2 H(+). The enzyme catalyses CoA + H2O = (R)-4'-phosphopantetheine + adenosine 3',5'-bisphosphate + 2 H(+). It carries out the reaction propanoyl-CoA + H2O = propanoyl-4'-phosphopantetheine + adenosine 3',5'-bisphosphate + 2 H(+). The catalysed reaction is malonyl-CoA + H2O = malonyl-4'-phosphopantetheine + adenosine 3',5'-bisphosphate + 2 H(+). It catalyses the reaction succinyl-CoA + H2O = succinyl-4'-phosphopantetheine + adenosine 3',5'-bisphosphate + 2 H(+). The enzyme catalyses a 5'-end CoA-ribonucleoside in mRNA + H2O = a 5'-end phospho-adenosine-phospho-ribonucleoside in mRNA + (R)-4'-phosphopantetheine + 2 H(+). Its activity is regulated as follows. Inhibited by fluoride. In terms of biological role, fatty acyl-coenzyme A (CoA) diphosphatase that hydrolyzes fatty acyl-CoA to yield acyl-4'-phosphopantetheine and adenosine 3',5'-bisphosphate. Cleaves CoA, CoA esters and oxidized CoA with similar efficiencies. Preferentially hydrolyzes medium-chain acyl-CoAs and bile acid-CoAs. Has no activity toward NDP-sugars, CDP-alcohols, (deoxy)nucleoside 5'-triphosphates, nucleoside 5'-di or monophosphates, diadenosine polyphosphates, NAD, NADH, NADP, NADPH or thymidine-5'-monophospho-p-nitrophenyl ester. May be required to eliminate oxidized CoA from peroxisomes, or regulate CoA and acyl-CoA levels in this organelle in response to metabolic demand. Does not play a role in U8 snoRNA decapping activity. Binds U8 snoRNA. Exhibits decapping activity towards dpCoA-capped RNAs in vitro. This is Peroxisomal coenzyme A diphosphatase NUDT7 from Mus musculus (Mouse).